A 138-amino-acid polypeptide reads, in one-letter code: Transcription antitermination protein NusB (138 aa).

The protein belongs to the NusB family.

In terms of biological role, involved in transcription antitermination. Required for transcription of ribosomal RNA (rRNA) genes. Binds specifically to the boxA antiterminator sequence of the ribosomal RNA (rrn) operons. The chain is Transcription antitermination protein NusB from Blochmanniella floridana.